The chain runs to 194 residues: AEVAPAPAAAAPAKAPKKKAAAKPKKSGPAVGELAGKAVAASKERSGVSLAALKKSLAAGGYDVEKNNSRVKIAVKSLVTKGTLVETKGTGASGSFKLNKKAVEAKKPAKKAAAPKAKKVAAKKPAAAKKPKKVAAKKAVAAKKSPKKAKKPATPKKAAKSPKKATKAAKPKAAKPKKAAKSPKKVKKPAAAKK.

Residue Ala-1 is modified to N-acetylalanine; partial. Residues 1 to 14 (AEVAPAPAAAAPAK) show a composition bias toward low complexity. 2 disordered regions span residues 1–31 (AEVAPAPAAAAPAKAPKKKAAAKPKKSGPAV) and 105–194 (AKKP…AAKK). The span at 15 to 26 (APKKKAAAKPKK) shows a compositional bias: basic residues. The H15 domain maps to 27–100 (SGPAVGELAG…GASGSFKLNK (74 aa)). The segment covering 116–194 (KAKKVAAKKP…KVKKPAAAKK (79 aa)) has biased composition (basic residues). Residues Ser-145, Ser-161, and Ser-182 each carry the phosphoserine modification.

It belongs to the histone H1/H5 family.

Its subcellular location is the nucleus. The protein resides in the chromosome. In terms of biological role, histones H1 are necessary for the condensation of nucleosome chains into higher-order structures. This chain is Histone H1, found in Salmo trutta (Brown trout).